The following is a 111-amino-acid chain: Putative single-stranded DNA-binding protein ycf41 (111 aa).

One can recognise an SSB domain in the interval 1 to 98; sequence MNSCTLLVQI…FSTSRIFKYK (98 aa).

Its subcellular location is the plastid. It is found in the chloroplast. This is Putative single-stranded DNA-binding protein ycf41 (ycf41) from Pyropia yezoensis (Susabi-nori).